A 294-amino-acid polypeptide reads, in one-letter code: Negative regulator of the PHO system (294 aa).

Residues 7-289 form the Protein kinase domain; that stretch reads FQQLEKLGEG…ARQSLEHPWF (283 aa). Residues 13–21 and K36 contribute to the ATP site; that span reads LGEGTYATV. D130 (proton acceptor) is an active-site residue.

Belongs to the protein kinase superfamily. CMGC Ser/Thr protein kinase family. CDC2/CDKX subfamily. In terms of assembly, interacts with a number of cyclins.

The enzyme catalyses L-seryl-[protein] + ATP = O-phospho-L-seryl-[protein] + ADP + H(+). It catalyses the reaction L-threonyl-[protein] + ATP = O-phospho-L-threonyl-[protein] + ADP + H(+). Functionally, when phosphate concentrations are high it phosphorylates the PHO4 transcription factor thus establishing repression. The polypeptide is Negative regulator of the PHO system (PHO85) (Yarrowia lipolytica (strain CLIB 122 / E 150) (Yeast)).